The sequence spans 638 residues: MPRLLRGVFCVVEIFHKYAIEDGGNQATLTRTELRQLLEGEIGDFLQPHVFHAVERKLNLLNFDRDGTISFEEFVLAIFSLLNPSYFDISLLNSEPRLMSKSEKIDAVDLGAIGGNIQQVVGVGPTQERLIFPSEMASSGQPSNEEGEVGDEPMVSPCEDIKTHSLPRNVSEPNDPENQQPKEDAQEVAQNVPATEYDGVQFKRNTVVEVPKQSTSPTQEIPRERSKPSRRLSDTKISDHMIQRPTEDEEHTSTTQDPFLQKRDKATGSENTDLSVVAATRKSSQTQEIFEPMDDTKLSEAQETGKDAGRIPPETNLEEPKADAKVAESHGLPAQEREHNTRDQSVQSRSRNVSETSSRGEQEGEWKEHERITLSPTADAETQDEKCQEFPGSWRENDAKKDSAAKDPSSEEGNQNLPEIKEDSVSGKEARHSEEDTVYAFEINKNSPAAEETLETRERSQELAPLEKQSQRKKHRATRIQDKPVRKEDHNEGEDSELSLTQSDEGFCEIPNSLAPEVGKSSSEIAEPHVPEDSQSQIDHHGDAKQESHTNNPDPQKQGAPGESSREQEAVVLSIQEDGQLPEGQEQSARDGLHDGLSSRTKGGPGAAVEPSEGEEVQEATAGRENRKALEAESLEAQ.

The EF-hand domain maps to 49-84 (HVFHAVERKLNLLNFDRDGTISFEEFVLAIFSLLNP). Residues 134-638 (SEMASSGQPS…ALEAESLEAQ (505 aa)) are disordered. The segment covering 166–179 (LPRNVSEPNDPENQ) has biased composition (polar residues). Basic and acidic residues-rich tracts occupy residues 221–246 (IPRERSKPSRRLSDTKISDHMIQRPT), 294–309 (DDTKLSEAQETGKDAG), and 318–328 (EEPKADAKVAE). The span at 343 to 357 (DQSVQSRSRNVSETS) shows a compositional bias: polar residues. Composition is skewed to basic and acidic residues over residues 358–372 (SRGEQEGEWKEHERI), 395–409 (RENDAKKDSAAKDPS), 419–435 (EIKEDSVSGKEARHSEE), 479–490 (RIQDKPVRKEDH), 526–548 (AEPHVPEDSQSQIDHHGDAKQES), and 622–631 (AGRENRKALE).

It belongs to the S-100 family.

The protein is Trichohyalin-like protein 1 (Tchhl1) of Mus musculus (Mouse).